Here is a 266-residue protein sequence, read N- to C-terminus: Amylovoran biosynthesis glycosyltransferase AmsE (266 aa).

The protein belongs to the glycosyltransferase 2 family.

Its pathway is glycan metabolism; exopolysaccharide biosynthesis. Its function is as follows. Involved in the biosynthesis of amylovoran which functions as a virulence factor. This is Amylovoran biosynthesis glycosyltransferase AmsE (amsE) from Erwinia amylovora (Fire blight bacteria).